Reading from the N-terminus, the 264-residue chain is MTLSAPSDALVIAGKPYRSRLLTGTGKFKDLDETRLATEAAAAQIVTVAIRRVNIGQDPNAPSLLDVLPPDRYTLLPNTAGCYTAEDAVRTCRLARELLDGHNLTKLEVLGDERTLYPDVVQTLKAAEQLVADGFEVMVYTSDDPILAKRLEEIGCVAVMPLAAPIGSGLGIQNKYNLLEIIENAKVPIIVDAGVGTASDAAIAMELGCDGVLMNTAIAGARDPILMASAMRKAIEAGREAFLAGRIPRKRYASASSPVDGVIG.

Residue lysine 106 is the Schiff-base intermediate with DXP of the active site. 1-deoxy-D-xylulose 5-phosphate-binding positions include glycine 167, 193–194, and 215–216; these read AG and NT.

It belongs to the ThiG family. In terms of assembly, homotetramer. Forms heterodimers with either ThiH or ThiS.

The protein localises to the cytoplasm. It catalyses the reaction [ThiS sulfur-carrier protein]-C-terminal-Gly-aminoethanethioate + 2-iminoacetate + 1-deoxy-D-xylulose 5-phosphate = [ThiS sulfur-carrier protein]-C-terminal Gly-Gly + 2-[(2R,5Z)-2-carboxy-4-methylthiazol-5(2H)-ylidene]ethyl phosphate + 2 H2O + H(+). It functions in the pathway cofactor biosynthesis; thiamine diphosphate biosynthesis. Its function is as follows. Catalyzes the rearrangement of 1-deoxy-D-xylulose 5-phosphate (DXP) to produce the thiazole phosphate moiety of thiamine. Sulfur is provided by the thiocarboxylate moiety of the carrier protein ThiS. In vitro, sulfur can be provided by H(2)S. The polypeptide is Thiazole synthase (Xanthomonas campestris pv. campestris (strain 8004)).